Consider the following 35-residue polypeptide: Photosystem II reaction center protein M (35 aa).

The chain crosses the membrane as a helical span at residues 7–27 (GFIASILFVLVPTVFLLILFI).

Belongs to the PsbM family. As to quaternary structure, PSII is composed of 1 copy each of membrane proteins PsbA, PsbB, PsbC, PsbD, PsbE, PsbF, PsbH, PsbI, PsbJ, PsbK, PsbL, PsbM, PsbT, PsbX, PsbY, PsbZ, Psb30/Ycf12, peripheral proteins PsbO, CyanoQ (PsbQ), PsbU, PsbV and a large number of cofactors. It forms dimeric complexes.

Its subcellular location is the cellular thylakoid membrane. Its function is as follows. One of the components of the core complex of photosystem II (PSII). PSII is a light-driven water:plastoquinone oxidoreductase that uses light energy to abstract electrons from H(2)O, generating O(2) and a proton gradient subsequently used for ATP formation. It consists of a core antenna complex that captures photons, and an electron transfer chain that converts photonic excitation into a charge separation. This subunit is found at the monomer-monomer interface. The chain is Photosystem II reaction center protein M from Microcystis aeruginosa (strain NIES-843 / IAM M-2473).